A 101-amino-acid chain; its full sequence is Interleukin-8 (101 aa).

The N-terminal stretch at 1–22 (MNSKLAVALLATFLLSLTLCEA) is a signal peptide. Arg-27 is subject to Citrulline. Disulfide bonds link Cys-34–Cys-61 and Cys-36–Cys-77.

The protein belongs to the intercrine alpha (chemokine CxC) family. As to quaternary structure, homodimer. Interacts with TNFAIP6 (via Link domain); this interaction interferes with chemokine binding to glycosaminoglycans. Post-translationally, citrullination at Arg-27 prevents proteolysis, and dampens tissue inflammation, it also enhances leukocytosis, possibly through impaired chemokine clearance from the blood circulation.

The protein localises to the secreted. Its function is as follows. Chemotactic factor that mediates inflammatory response by attracting neutrophils, basophils, and T-cells to clear pathogens and protect the host from infection. Also plays an important role in neutrophil activation. Released in response to an inflammatory stimulus, exerts its effect by binding to the G-protein-coupled receptors CXCR1 and CXCR2, primarily found in neutrophils, monocytes and endothelial cells. G-protein heterotrimer (alpha, beta, gamma subunits) constitutively binds to CXCR1/CXCR2 receptor and activation by IL8 leads to beta and gamma subunits release from Galpha (GNAI2 in neutrophils) and activation of several downstream signaling pathways including PI3K and MAPK pathways. The protein is Interleukin-8 (CXCL8) of Oryctolagus cuniculus (Rabbit).